Consider the following 207-residue polypeptide: Small ribosomal subunit protein uS4c (207 aa).

Residues 92–150 (MRLDNILFRLGFVPTIPSARQLINHRHILVNNRIVDVPSFHCKPKDIITIGSPKTYQSI) enclose the S4 RNA-binding domain.

The protein belongs to the universal ribosomal protein uS4 family. As to quaternary structure, part of the 30S ribosomal subunit. Contacts protein S5. The interaction surface between S4 and S5 is involved in control of translational fidelity.

The protein resides in the plastid. It is found in the chloroplast. Its function is as follows. One of the primary rRNA binding proteins, it binds directly to 16S rRNA where it nucleates assembly of the body of the 30S subunit. With S5 and S12 plays an important role in translational accuracy. In Equisetum variegatum (Variegated horsetail), this protein is Small ribosomal subunit protein uS4c (rps4).